The following is a 79-amino-acid chain: Acyl carrier protein (79 aa).

A Carrier domain is found at 2 to 77; it reads STIEERVKKI…QAIDYVKVHV (76 aa). Ser37 carries the O-(pantetheine 4'-phosphoryl)serine modification.

Belongs to the acyl carrier protein (ACP) family. 4'-phosphopantetheine is transferred from CoA to a specific serine of apo-ACP by AcpS. This modification is essential for activity because fatty acids are bound in thioester linkage to the sulfhydryl of the prosthetic group.

The protein resides in the cytoplasm. Its pathway is lipid metabolism; fatty acid biosynthesis. Carrier of the growing fatty acid chain in fatty acid biosynthesis. In Xanthomonas albilineans, this protein is Acyl carrier protein.